Consider the following 137-residue polypeptide: Small ribosomal subunit protein uS12 (137 aa).

The interval 1–57 (MPTINQLVRKPRKSKVEKSKSPALNVGYNSRKKVQTNVSSPQKRGVATRVGTMTPKK) is disordered. The residue at position 102 (D102) is a 3-methylthioaspartic acid.

It belongs to the universal ribosomal protein uS12 family. As to quaternary structure, part of the 30S ribosomal subunit. Contacts proteins S8 and S17. May interact with IF1 in the 30S initiation complex.

With S4 and S5 plays an important role in translational accuracy. Functionally, interacts with and stabilizes bases of the 16S rRNA that are involved in tRNA selection in the A site and with the mRNA backbone. Located at the interface of the 30S and 50S subunits, it traverses the body of the 30S subunit contacting proteins on the other side and probably holding the rRNA structure together. The combined cluster of proteins S8, S12 and S17 appears to hold together the shoulder and platform of the 30S subunit. The chain is Small ribosomal subunit protein uS12 from Streptococcus suis (strain 98HAH33).